The sequence spans 443 residues: 26S proteasome regulatory subunit rpn501 (443 aa).

S209 is modified (phosphoserine). The PCI domain occupies 230–402 (DVCKYYRAVY…QVISFKKSQN (173 aa)).

The protein belongs to the proteasome subunit p55 family.

It is found in the nucleus. Its function is as follows. Acts as a regulatory subunit of the 26S proteasome which is involved in the ATP-dependent degradation of ubiquitinated proteins. Required for proper proteasome assembly. The chain is 26S proteasome regulatory subunit rpn501 (rpn501) from Schizosaccharomyces pombe (strain 972 / ATCC 24843) (Fission yeast).